Here is a 459-residue protein sequence, read N- to C-terminus: Cyclin-dependent kinase F-4 (459 aa).

The region spanning F4–F283 is the Protein kinase domain. Residues V10–V18 and K33 each bind ATP. D125 functions as the Proton acceptor in the catalytic mechanism. S151 carries the post-translational modification Phosphoserine. Residue T156 is modified to Phosphothreonine. The interval K310 to G397 is disordered. Polar residues-rich tracts occupy residues S322–G346 and E366–R375.

It belongs to the protein kinase superfamily. CMGC Ser/Thr protein kinase family. CDC2/CDKX subfamily.

It catalyses the reaction L-seryl-[protein] + ATP = O-phospho-L-seryl-[protein] + ADP + H(+). The enzyme catalyses L-threonyl-[protein] + ATP = O-phospho-L-threonyl-[protein] + ADP + H(+). It carries out the reaction [DNA-directed RNA polymerase] + ATP = phospho-[DNA-directed RNA polymerase] + ADP + H(+). The polypeptide is Cyclin-dependent kinase F-4 (CDKF-4) (Oryza sativa subsp. japonica (Rice)).